A 187-amino-acid chain; its full sequence is Orotate phosphoribosyltransferase (187 aa).

5-phospho-alpha-D-ribose 1-diphosphate-binding positions include Arg98, Lys99, Lys102, His104, and 128-136; that span reads EDVTTTGGS. 2 residues coordinate orotate: Thr132 and Arg160.

The protein belongs to the purine/pyrimidine phosphoribosyltransferase family. PyrE subfamily. Homodimer. It depends on Mg(2+) as a cofactor.

The enzyme catalyses orotidine 5'-phosphate + diphosphate = orotate + 5-phospho-alpha-D-ribose 1-diphosphate. It participates in pyrimidine metabolism; UMP biosynthesis via de novo pathway; UMP from orotate: step 1/2. Its function is as follows. Catalyzes the transfer of a ribosyl phosphate group from 5-phosphoribose 1-diphosphate to orotate, leading to the formation of orotidine monophosphate (OMP). This is Orotate phosphoribosyltransferase from Bradyrhizobium diazoefficiens (strain JCM 10833 / BCRC 13528 / IAM 13628 / NBRC 14792 / USDA 110).